The chain runs to 315 residues: Olfactory receptor 5A1 (315 aa).

Residues 1–28 (MSITKAWNSSSVTMFILLGFTDHPELQA) lie on the Extracellular side of the membrane. A glycan (N-linked (GlcNAc...) asparagine) is linked at Asn-8. A helical membrane pass occupies residues 29–52 (LLFVTFLGIYLTTLAWNLALIFLI). The Cytoplasmic portion of the chain corresponds to 53–60 (RGDTHLHT). The helical transmembrane segment at 61-82 (PMYFFLSNLSFIDICYSSAVAP) threads the bilayer. At 83-103 (NMLTDFFWEQKTISFVGCAAQ) the chain is on the extracellular side. Cys-100 and Cys-192 form a disulfide bridge. The chain crosses the membrane as a helical span at residues 104–123 (FFFFVGMGLSECLLLTAMAY). Residues 124–142 (DRYAAISSPLLYPTIMTQG) are Cytoplasmic-facing. The chain crosses the membrane as a helical span at residues 143–161 (LCTRMVVGAYVGGFLSSLI). Residues 162–198 (QASSIFRLHFCGPNIINHFFCDLPPVLALSCSDTFLS) lie on the Extracellular side of the membrane. The helical transmembrane segment at 199 to 222 (QVVNFLVVVTVGGTSFLQLLISYG) threads the bilayer. The Cytoplasmic segment spans residues 223–239 (YIVSAVLKIPSAEGRWK). Residues 240 to 262 (ACNTCASHLMVVTLLFGTALFVY) form a helical membrane-spanning segment. The Extracellular segment spans residues 263 to 275 (LRPSSSYLLGRDK). A helical transmembrane segment spans residues 276–295 (VVSVFYSLVIPMLNPLIYSL). The Cytoplasmic portion of the chain corresponds to 296-315 (RNKEIKDALWKVLERKKVFS).

The protein belongs to the G-protein coupled receptor 1 family.

The protein resides in the cell membrane. Odorant receptor. The protein is Olfactory receptor 5A1 (OR5A1) of Homo sapiens (Human).